The following is a 213-amino-acid chain: ATP-dependent Clp protease proteolytic subunit (213 aa).

S114 functions as the Nucleophile in the catalytic mechanism. Residue H139 is part of the active site.

Belongs to the peptidase S14 family. As to quaternary structure, fourteen ClpP subunits assemble into 2 heptameric rings which stack back to back to give a disk-like structure with a central cavity, resembling the structure of eukaryotic proteasomes.

It is found in the cytoplasm. It catalyses the reaction Hydrolysis of proteins to small peptides in the presence of ATP and magnesium. alpha-casein is the usual test substrate. In the absence of ATP, only oligopeptides shorter than five residues are hydrolyzed (such as succinyl-Leu-Tyr-|-NHMec, and Leu-Tyr-Leu-|-Tyr-Trp, in which cleavage of the -Tyr-|-Leu- and -Tyr-|-Trp bonds also occurs).. Cleaves peptides in various proteins in a process that requires ATP hydrolysis. Has a chymotrypsin-like activity. Plays a major role in the degradation of misfolded proteins. In Pseudomonas putida (strain ATCC 47054 / DSM 6125 / CFBP 8728 / NCIMB 11950 / KT2440), this protein is ATP-dependent Clp protease proteolytic subunit.